The chain runs to 349 residues: Phosphoribosylformylglycinamidine cyclo-ligase (349 aa).

The protein belongs to the AIR synthase family.

The protein localises to the cytoplasm. It catalyses the reaction 2-formamido-N(1)-(5-O-phospho-beta-D-ribosyl)acetamidine + ATP = 5-amino-1-(5-phospho-beta-D-ribosyl)imidazole + ADP + phosphate + H(+). It participates in purine metabolism; IMP biosynthesis via de novo pathway; 5-amino-1-(5-phospho-D-ribosyl)imidazole from N(2)-formyl-N(1)-(5-phospho-D-ribosyl)glycinamide: step 2/2. This is Phosphoribosylformylglycinamidine cyclo-ligase from Methanococcus maripaludis (strain DSM 14266 / JCM 13030 / NBRC 101832 / S2 / LL).